The chain runs to 818 residues: METIKRMIWPKKEIFVGDFATGVNRTVPVNIFQLVCRVVLRYMRTGKIECDSDSMTKFIVELLKTDCAAKWEWFMKRRQRGDYIVPLSIASIPIIPLLSYATRVRAVSVKAFGNELSFNVRVPRPSVPKKGLLLRLAAGLALAPICALAVYATLPREKLSVFKLRTEARAHMEDEREATDCLVVEPARELKGKDGEDLLTGSRLTKVIASTGRPRRRPYAAKIAQVARAKVGYLKNSPENRLIYQRVMIEIMDKDCVRYVDRDVILPLAIGCCFVYPDGVEESAALWGSQESLGVKXGGLVRLPGVVTQINRDIPSDVLLPQEVLEVRTGPPNAKDRNIFMVAGCPSQARFLVHNHCLKNLKRGLVERVFCVERNGKLARTPQPTKGAFGRLSPFRKAVCEKVGVAHRLGYDGFLSYYSGAKLRTYTRAVESLHITPVSERDSHLTTFVKAEKISTSKGDPAPRVIQPRNPRYNVELGRYLRHMESKLMKAVDGVFGETTCIKGYTADEVGAIFRAKWDRFDKPVAIGLDASRFDQHCSVEALQYEHSFYRAMYPGNKLLGKLLEWQLHNKGKGYVPDGTITYRKEGCRMSGDINTSLGNYLLMCAMVHGYMRHLGINEFSLANCGDDCVLIVERRNLKQIQRTLPEYFLNLGYTMKVEQPVFQLEEVEFCQAHPVQFQGGWKMVRNVRTAMSKDVHCVNNIRDLATRRAWSNAQHHGGLALSAGIPVVETFYSRFKLYDVPRKHQRIDTVTNVHKWRGSGGSYVVTPESRASFWAAFGLTGDEQLALEDRLERWEMDLFGEEGVDAHEPSILDSAVA.

The region spanning Pro-524–Ile-641 is the RdRp catalytic domain.

This sequence belongs to the tombusviridae RNA polymerase family.

The catalysed reaction is RNA(n) + a ribonucleoside 5'-triphosphate = RNA(n+1) + diphosphate. In terms of biological role, RNA-dependent RNA polymerase that plays an essential role in the virus replication. The polypeptide is RNA-directed RNA polymerase (Tomato bushy stunt virus (strain Cherry) (TBSV)).